The following is a 709-amino-acid chain: Ral guanine nucleotide dissociation stimulator-like 3 (709 aa).

Residues 26 to 55 (VYSVSLRRQRSQRSTPERSGEGQTPIPATD) are disordered. Residues 64-201 (KVRALRAARL…LLEDFLKEAK (138 aa)) form the N-terminal Ras-GEF domain. Disordered regions lie at residues 203–225 (EQTE…TPGS), 395–416 (SQEE…KLPP), and 502–604 (PPAA…SRVP). The Ras-GEF domain maps to 248–503 (SVDDVAEQLT…YRVSRVIEPP (256 aa)). 2 stretches are compositionally biased toward low complexity: residues 502-511 (PPAASCPSSP) and 533-551 (SSPG…SVSP). 2 positions are modified to phosphoserine: Ser506 and Ser510. The segment covering 552-576 (GSPPSSPRNREPPPPGSPPASPGPQ) has biased composition (pro residues). Ser553, Ser568, Ser572, Ser577, and Ser600 each carry phosphoserine. The interaction with HRAS, MRAS and RIT1 stretch occupies residues 611-706 (SEARVIRVSI…KEGTGHTLSA (96 aa)). One can recognise a Ras-associating domain in the interval 612–699 (EARVIRVSIN…GDFLLRRKEG (88 aa)).

As to quaternary structure, interacts with GTP-bound forms of RIT1, HRAS and MRAS. As to expression, widely expressed. Expressed at high levels in the liver and kidney.

Its function is as follows. Guanine nucleotide exchange factor (GEF) for Ral-A. Potential effector of GTPase HRas and Ras-related protein M-Ras. Negatively regulates Elk-1-dependent gene induction downstream of HRas and MEKK1. This is Ral guanine nucleotide dissociation stimulator-like 3 (Rgl3) from Mus musculus (Mouse).